Consider the following 479-residue polypeptide: U6 small nuclear RNA (adenine-(43)-N(6))-methyltransferase (479 aa).

S-adenosyl-L-methionine-binding residues include lysine 82, glycine 108, aspartate 131, threonine 164, and asparagine 184. The involved in dlc-1 binding stretch occupies residues 420-424 (DNASQ).

Belongs to the methyltransferase superfamily. METTL16/RlmF family. In terms of assembly, self-associates. Interacts with dlc-1; the interaction is direct, and is required for nuclear localization of mett-10. As to expression, expressed in the intestine, vulva, and cells of the somatic gonad including distal tip cells, gonadal sheath cells and spermatheca.

The protein resides in the nucleus. The enzyme catalyses an adenosine in mRNA + S-adenosyl-L-methionine = an N(6)-methyladenosine in mRNA + S-adenosyl-L-homocysteine + H(+). It carries out the reaction adenosine in U6 snRNA + S-adenosyl-L-methionine = N(6)-methyladenosine in U6 snRNA + S-adenosyl-L-homocysteine + H(+). Functionally, RNA N6-methyltransferase that methylates adenosine residues at the N(6) position of a subset of RNAs and is involved in S-adenosyl-L-methionine homeostasis by regulating splicing of S-adenosylmethionine synthase transcripts (sams-3, sams-4 and sams-5). Able to N6-methylate a subset of mRNAs containing the 5'UACAGAAAC-3' nonamer sequence. Plays a key role in S-adenosyl-L-methionine homeostasis: under rich-diet conditions, catalyzes N6-methylation of S-adenosylmethionine synthase mRNAs (sams-3, sams-4 and sams-5), directly inhibiting splicing and protein production of S-adenosylmethionine synthase. In addition to mRNAs, also able to mediate N6-methylation of U6 small nuclear RNA (U6 snRNA). Required for gamete production, inhibiting germ cell proliferative fate and ensuring germ cell meiotic development. Also promotes progression of the mitotic cell cycle in those germ cells that continue to proliferate. Plays a role in the development of the vulva, somatic gonad and embryo. The protein is U6 small nuclear RNA (adenine-(43)-N(6))-methyltransferase of Caenorhabditis elegans.